Reading from the N-terminus, the 362-residue chain is Chorismate synthase (362 aa).

Arg46 is an NADP(+) binding site. Residues 122–124, 238–239, Gly278, 293–297, and Arg319 contribute to the FMN site; these read RSS, NA, and KPTPS.

This sequence belongs to the chorismate synthase family. As to quaternary structure, homotetramer. The cofactor is FMNH2.

It catalyses the reaction 5-O-(1-carboxyvinyl)-3-phosphoshikimate = chorismate + phosphate. It participates in metabolic intermediate biosynthesis; chorismate biosynthesis; chorismate from D-erythrose 4-phosphate and phosphoenolpyruvate: step 7/7. In terms of biological role, catalyzes the anti-1,4-elimination of the C-3 phosphate and the C-6 proR hydrogen from 5-enolpyruvylshikimate-3-phosphate (EPSP) to yield chorismate, which is the branch point compound that serves as the starting substrate for the three terminal pathways of aromatic amino acid biosynthesis. This reaction introduces a second double bond into the aromatic ring system. This chain is Chorismate synthase, found in Campylobacter jejuni subsp. jejuni serotype O:2 (strain ATCC 700819 / NCTC 11168).